The following is a 713-amino-acid chain: Calpastatin (713 aa).

Disordered stretches follow at residues 1-187 and 211-506; these read MNPT…LDPM and DKKE…PVLP. Residues 21 to 30 show a composition bias toward basic residues; it reads PNKKRHKKQA. Lys-32 participates in a covalent cross-link: Glycyl lysine isopeptide (Lys-Gly) (interchain with G-Cter in SUMO2). The span at 46 to 63 shows a compositional bias: basic and acidic residues; sequence VVHEKKTQEVKPKEHPEP. Lys-50 is subject to N6-acetyllysine. Positions 85-94 are enriched in polar residues; that stretch reads SRSNEQPTSE. Phosphoserine is present on residues Ser-87 and Ser-134. Thr-136 carries the post-translational modification Phosphothreonine. An Inhibitory domain 1 repeat occupies 171 to 223; sequence TEEDNTTYTGPEVLDPMSSTYIEELGKREVTLPPKYRELLDKKEGIPVPPPDT. Ser-244 bears the Phosphoserine mark. Composition is skewed to basic and acidic residues over residues 248-258, 304-332, and 342-367; these read DGKKTEKEKST, RKSE…KKCG, and YRLK…KPLS. Residues 307-359 form an Inhibitory domain 2 repeat; it reads EPELDLSSIKEIDEAKAKEEKLKKCGEDDETVPPEYRLKPAMDKDGKPLLPEA. Residues Ser-367, Ser-369, and Ser-376 each carry the phosphoserine modification. Residues 370-379 are compositionally biased toward acidic residues; that stretch reads ELIDELSEDF. Positions 380–397 are enriched in basic and acidic residues; sequence DQSKRKEKQSKPTEKTKE. Ser-441 is modified (phosphoserine). Residues 443-502 are compositionally biased toward basic and acidic residues; it reads GKKEADPEDGKPVEDKVKEKAKEEDREKLGEKEETIPPDYRLEEVKDKDGKTLPHKDPKE. The stretch at 447-500 is one Inhibitory domain 3 repeat; that stretch reads ADPEDGKPVEDKVKEKAKEEDREKLGEKEETIPPDYRLEEVKDKDGKTLPHKDP. 2 positions are modified to phosphoserine: Ser-517 and Ser-528. Positions 536-713 are disordered; sequence SAAVSEVVSQ…KQKSDGKSTS (178 aa). Over residues 542 to 553 the composition is skewed to polar residues; the sequence is VVSQTSAPTTHS. Phosphoserine is present on residues Ser-575 and Ser-577. Residues 583 to 636 form an Inhibitory domain 4 repeat; it reads PDPDENKPIEDKVKEKAEAEHRDKLGERDDTIPPEYRHLLDKDEEGKSTKPPTK. Composition is skewed to basic and acidic residues over residues 583-646 and 691-713; these read PDPD…KPEA and KAKD…KSTS.

The protein belongs to the protease inhibitor I27 (calpastatin) family.

In terms of biological role, specific inhibition of calpain (calcium-dependent cysteine protease). Plays a key role in postmortem tenderization of meat and have been proposed to be involved in muscle protein degradation in living tissue. This Sus scrofa (Pig) protein is Calpastatin (CAST).